The sequence spans 259 residues: Ribonuclease HII (259 aa).

One can recognise an RNase H type-2 domain in the interval 70–258; that stretch reads TLIAGIDEVG…VKSLVLGKKE (189 aa). Residues Asp76, Glu77, and Asp168 each contribute to the a divalent metal cation site.

Belongs to the RNase HII family. Mn(2+) is required as a cofactor. The cofactor is Mg(2+).

The protein resides in the cytoplasm. It catalyses the reaction Endonucleolytic cleavage to 5'-phosphomonoester.. Its function is as follows. Endonuclease that specifically degrades the RNA of RNA-DNA hybrids. In Streptococcus pneumoniae (strain Taiwan19F-14), this protein is Ribonuclease HII.